A 313-amino-acid polypeptide reads, in one-letter code: Porphobilinogen deaminase (313 aa).

Position 241 is an S-(dipyrrolylmethanemethyl)cysteine (Cys-241).

It belongs to the HMBS family. As to quaternary structure, monomer. The cofactor is dipyrromethane.

It carries out the reaction 4 porphobilinogen + H2O = hydroxymethylbilane + 4 NH4(+). The protein operates within porphyrin-containing compound metabolism; protoporphyrin-IX biosynthesis; coproporphyrinogen-III from 5-aminolevulinate: step 2/4. Its function is as follows. Tetrapolymerization of the monopyrrole PBG into the hydroxymethylbilane pre-uroporphyrinogen in several discrete steps. The chain is Porphobilinogen deaminase from Bacillus velezensis (strain DSM 23117 / BGSC 10A6 / LMG 26770 / FZB42) (Bacillus amyloliquefaciens subsp. plantarum).